The primary structure comprises 204 residues: Sex-determining region Y protein (204 aa).

Residues 59–136 are sufficient for interaction with KPNB1; that stretch reads RVKRPMNAFI…YKYRPRRKAK (78 aa). The HMG box DNA-binding region spans 60–128; it reads VKRPMNAFIV…MHREKYPNYK (69 aa). Required for nuclear localization stretches follow at residues 61-77 and 130-136; these read KRPM…QRRK and RPRRKAK. The segment at 107 to 139 is sufficient for interaction with EP300; it reads WPFFQEAQKLQAMHREKYPNYKYRPRRKAKMLP. Lys136 is subject to N6-acetyllysine. The segment at 138 to 155 is necessary for interaction with ZNF208 isoform KRAB-O; sequence LPKNCSLLPADPASVLCS. The disordered stretch occupies residues 175 to 204; sequence RMEHQLGHLPPINAASSPQQRDRYSHWTKL. Residues 194–204 are compositionally biased toward basic and acidic residues; that stretch reads QRDRYSHWTKL. The interval 198–204 is necessary for interaction with SLC9A3R2; it reads YSHWTKL.

This sequence belongs to the SRY family. As to quaternary structure, interacts with CALM, EP300, HDAC3, KPNB1, ZNF208 isoform KRAB-O, PARP1, SLC9A3R2 and WT1. The interaction with EP300 modulates its DNA-binding activity. The interaction with KPNB1 is sensitive to dissociation by Ran in the GTP-bound form. Interaction with PARP1 impaired its DNA-binding activity. In terms of processing, phosphorylated on serine residues by PKA. Phosphorylation by PKA enhances its DNA-binding activity and stimulates transcription repression. Acetylation of Lys-136 contributes to its nuclear localization and enhances its interaction with KPNB1. Deacetylated by HDAC3. Post-translationally, poly-ADP-ribosylated by PARP1. ADP-ribosylation reduces its DNA-binding activity.

Its subcellular location is the nucleus speckle. It localises to the cytoplasm. The protein resides in the nucleus. Transcriptional regulator that controls a genetic switch in male development. It is necessary and sufficient for initiating male sex determination by directing the development of supporting cell precursors (pre-Sertoli cells) as Sertoli rather than granulosa cells. Involved in different aspects of gene regulation including promoter activation or repression. Binds to the DNA consensus sequence 5'-[AT]AACAA[AT]-3'. SRY HMG box recognizes DNA by partial intercalation in the minor groove and promotes DNA bending. Also involved in pre-mRNA splicing. In male adult brain involved in the maintenance of motor functions of dopaminergic neurons. The sequence is that of Sex-determining region Y protein from Homo sapiens (Human).